The primary structure comprises 323 residues: PTS system mannose-specific EIIAB component (323 aa).

The 123-residue stretch at 2 to 124 (TIAIVIGTHG…VALAVETGRE (123 aa)) folds into the PTS EIIA type-4 domain. His10 acts as the Tele-phosphohistidine intermediate; for EIIA activity in catalysis. His10 is subject to Phosphohistidine; by HPr. Position 55 is an N6-acetyllysine (Lys55). Residues 137–155 (AAPAPAAAAPKAAPTPAKP) form a hinge region. Residues 157 to 320 (GPNDYMVIGL…KLKMMDLISK (164 aa)) enclose the PTS EIIB type-4 domain. The active-site Pros-phosphohistidine intermediate; for EIIB activity is His175. Position 175 is a phosphohistidine; by EIIA (His175). Lys234 is modified (N6-acetyllysine).

In terms of assembly, homodimer.

The protein resides in the cytoplasm. It is found in the cell inner membrane. It carries out the reaction D-mannose(out) + N(pros)-phospho-L-histidyl-[protein] = D-mannose 6-phosphate(in) + L-histidyl-[protein]. The phosphoenolpyruvate-dependent sugar phosphotransferase system (sugar PTS), a major carbohydrate active transport system, catalyzes the phosphorylation of incoming sugar substrates concomitantly with their translocation across the cell membrane. The enzyme II ManXYZ PTS system is involved in mannose transport. This is PTS system mannose-specific EIIAB component (manX) from Escherichia coli O157:H7.